A 325-amino-acid polypeptide reads, in one-letter code: Elongation factor P--(R)-beta-lysine ligase (325 aa).

76–78 serves as a coordination point for substrate; sequence SPE. Residues 100-102 and Asn109 each bind ATP; that span reads RNE. Tyr118 is a binding site for substrate. 244–245 contacts ATP; that stretch reads EL. Glu251 provides a ligand contact to substrate. Gly300 is a binding site for ATP.

This sequence belongs to the class-II aminoacyl-tRNA synthetase family. EpmA subfamily. In terms of assembly, homodimer.

The enzyme catalyses D-beta-lysine + L-lysyl-[protein] + ATP = N(6)-((3R)-3,6-diaminohexanoyl)-L-lysyl-[protein] + AMP + diphosphate + H(+). With EpmB is involved in the beta-lysylation step of the post-translational modification of translation elongation factor P (EF-P). Catalyzes the ATP-dependent activation of (R)-beta-lysine produced by EpmB, forming a lysyl-adenylate, from which the beta-lysyl moiety is then transferred to the epsilon-amino group of a conserved specific lysine residue in EF-P. The sequence is that of Elongation factor P--(R)-beta-lysine ligase from Yersinia pseudotuberculosis serotype O:1b (strain IP 31758).